The following is a 545-amino-acid chain: Serine/threonine-protein kinase PAK 1 (545 aa).

Residues 1 to 77 (MSNNGLDIQD…KEKERPEISL (77 aa)) form a disordered region. Serine 2 is subject to N-acetylserine. Serine 21 is modified (phosphoserine; by PKB and autocatalysis). At serine 57 the chain carries Phosphoserine; by autocatalysis. Positions 68–77 (KEKERPEISL) are enriched in basic and acidic residues. The tract at residues 70-140 (KERPEISLPS…YNSKKTSNSQ (71 aa)) is autoregulatory region. The 14-residue stretch at 75 to 88 (ISLPSDFEHTIHVG) folds into the CRIB domain. The interval 75 to 105 (ISLPSDFEHTIHVGFDAVTGEFTGMPEQWAR) is GTPase-binding. Residue threonine 84 is modified to Phosphothreonine; by OXSR1. Serine 115 is modified (phosphoserine). 2 positions are modified to phosphotyrosine: tyrosine 131 and tyrosine 142. A Phosphoserine; by autocatalysis modification is found at serine 144. Serine 149 bears the Phosphoserine mark. Tyrosine 153 is modified (phosphotyrosine; by JAK2). The disordered stretch occupies residues 159–198 (LNVKAVSETPAVPPVSEDEDDDDDDATPPPVIAPRPEHTK). Serine 174 carries the post-translational modification Phosphoserine. Acidic residues predominate over residues 174-184 (SEDEDDDDDDA). The residue at position 185 (threonine 185) is a Phosphothreonine. Position 199 is a phosphoserine; by autocatalysis (serine 199). Phosphotyrosine; by JAK2 is present on tyrosine 201. Position 204 is a phosphoserine (serine 204). Residues 211–251 (VTPTRDVATSPISPTENNTTPPDALTRNTEKQKKKPKMSDE) form a disordered region. Threonine 212 and threonine 219 each carry phosphothreonine. Phosphoserine occurs at positions 220 and 223. Residues 220–231 (SPISPTENNTTP) are compositionally biased toward polar residues. Phosphothreonine is present on residues threonine 225, threonine 229, and threonine 230. One can recognise a Protein kinase domain in the interval 270 to 521 (YTRFEKIGQG…AKELLQHQFL (252 aa)). 276–284 (IGQGASGTV) lines the ATP pocket. Tyrosine 285 is subject to Phosphotyrosine; by JAK2. Residues lysine 299 and 345-347 (EYL) contribute to the ATP site. Aspartate 389 functions as the Proton acceptor in the catalytic mechanism. Position 423 is a phosphothreonine; by autocatalysis, BRSK2 and PDPK1 (threonine 423).

This sequence belongs to the protein kinase superfamily. STE Ser/Thr protein kinase family. STE20 subfamily. In terms of assembly, homodimer; homodimerization results in autoinhibition. Active as monomer. Interacts with GIT1. Component of cytoplasmic complexes, which also contains PXN, ARHGEF7 and GIT1. Interacts with NISCH. Interacts with DVL1; mediates the formation of a DVL1, MUSK and PAK1 ternary complex involved in AChR clustering. Binds to the caspase-cleaved p110 isoform of CDC2L1 and CDC2L2, p110C, but not the full-length proteins. Interacts with ARHGEF7. Interacts tightly with GTP-bound but not GDP-bound CDC42/P21 and RAC1. Interacts with SCRIB. Interacts with PDPK1. Interacts (via kinase domain) with RAF1. Interacts with NCK1 and NCK2. Interacts with TBCB. Interacts with BRSK2. Interacts with SNAI1. Interacts with CIB1 isoform 2. Interacts with CIB1 (via N-terminal region); the interaction is direct, promotes PAK1 activity and occurs in a calcium-dependent manner. Interacts with INPP5K. Interacts with gamma-tubulin. Interacts with RHOU; the interaction promotes PAK1 activation. Mg(2+) serves as cofactor. Post-translationally, autophosphorylated in trans, meaning that in a dimer, one kinase molecule phosphorylates the other one. Activated by autophosphorylation at Thr-423 in response to a conformation change, triggered by interaction with GTP-bound CDC42 or RAC1. Activated by phosphorylation at Thr-423 by BRSK2 and by PDPK1. Phosphorylated by JAK2 in response to PRL; this increases PAK1 kinase activity. Phosphorylated at Ser-21 by PKB/AKT; this reduces interaction with NCK1 and association with focal adhesion sites. Upon DNA damage, phosphorylated at Thr-212 and translocates to the nucleoplasm. Phosphorylated at tyrosine residues, which can be enhanced by NTN1. Overexpressed in gastric cancer cells and tissues (at protein level).

The protein resides in the cytoplasm. It is found in the cell junction. Its subcellular location is the focal adhesion. The protein localises to the cell projection. It localises to the lamellipodium. The protein resides in the cell membrane. It is found in the ruffle membrane. Its subcellular location is the invadopodium. The protein localises to the nucleus. It localises to the nucleoplasm. The protein resides in the chromosome. It is found in the cytoskeleton. Its subcellular location is the microtubule organizing center. The protein localises to the centrosome. It catalyses the reaction L-seryl-[protein] + ATP = O-phospho-L-seryl-[protein] + ADP + H(+). It carries out the reaction L-threonyl-[protein] + ATP = O-phospho-L-threonyl-[protein] + ADP + H(+). Its activity is regulated as follows. Activated by binding small G proteins. Binding of GTP-bound CDC42 or RAC1 to the autoregulatory region releases monomers from the autoinhibited dimer, and enables activation by phosphorylation of Thr-423. Phosphorylation of Thr-84 by OXSR1 inhibits activation. In terms of biological role, protein kinase involved in intracellular signaling pathways downstream of integrins and receptor-type kinases that plays an important role in cytoskeleton dynamics, in cell adhesion, migration, proliferation, apoptosis, mitosis, and in vesicle-mediated transport processes. Can directly phosphorylate BAD and protects cells against apoptosis. Activated by interaction with CDC42 and RAC1. Functions as a GTPase effector that links the Rho-related GTPases CDC42 and RAC1 to the JNK MAP kinase pathway. Phosphorylates and activates MAP2K1, and thereby mediates activation of downstream MAP kinases. Involved in the reorganization of the actin cytoskeleton, actin stress fibers and of focal adhesion complexes. Phosphorylates the tubulin chaperone TBCB and thereby plays a role in the regulation of microtubule biogenesis and organization of the tubulin cytoskeleton. Plays a role in the regulation of insulin secretion in response to elevated glucose levels. Part of a ternary complex that contains PAK1, DVL1 and MUSK that is important for MUSK-dependent regulation of AChR clustering during the formation of the neuromuscular junction (NMJ). Activity is inhibited in cells undergoing apoptosis, potentially due to binding of CDC2L1 and CDC2L2. Phosphorylates MYL9/MLC2. Phosphorylates RAF1 at 'Ser-338' and 'Ser-339' resulting in: activation of RAF1, stimulation of RAF1 translocation to mitochondria, phosphorylation of BAD by RAF1, and RAF1 binding to BCL2. Phosphorylates SNAI1 at 'Ser-246' promoting its transcriptional repressor activity by increasing its accumulation in the nucleus. In podocytes, promotes NR3C2 nuclear localization. Required for atypical chemokine receptor ACKR2-induced phosphorylation of LIMK1 and cofilin (CFL1) and for the up-regulation of ACKR2 from endosomal compartment to cell membrane, increasing its efficiency in chemokine uptake and degradation. In synapses, seems to mediate the regulation of F-actin cluster formation performed by SHANK3, maybe through CFL1 phosphorylation and inactivation. Plays a role in RUFY3-mediated facilitating gastric cancer cells migration and invasion. In response to DNA damage, phosphorylates MORC2 which activates its ATPase activity and facilitates chromatin remodeling. In neurons, plays a crucial role in regulating GABA(A) receptor synaptic stability and hence GABAergic inhibitory synaptic transmission through its role in F-actin stabilization. In hippocampal neurons, necessary for the formation of dendritic spines and excitatory synapses; this function is dependent on kinase activity and may be exerted by the regulation of actomyosin contractility through the phosphorylation of myosin II regulatory light chain (MLC). Along with GIT1, positively regulates microtubule nucleation during interphase. Phosphorylates FXR1, promoting its localization to stress granules and activity. Phosphorylates ILK on 'Thr-173' and 'Ser-246', promoting nuclear export of ILK. In Homo sapiens (Human), this protein is Serine/threonine-protein kinase PAK 1.